A 183-amino-acid chain; its full sequence is NADH-quinone oxidoreductase subunit I (183 aa).

4Fe-4S ferredoxin-type domains lie at L44–G74 and R90–E119. The [4Fe-4S] cluster site is built by C54, C57, C60, C64, C99, C102, C105, and C109. The disordered stretch occupies residues Q143 to Q183. Residues R153–E176 show a composition bias toward basic and acidic residues.

It belongs to the complex I 23 kDa subunit family. In terms of assembly, NDH-1 is composed of 14 different subunits. Subunits NuoA, H, J, K, L, M, N constitute the membrane sector of the complex. The cofactor is [4Fe-4S] cluster.

It is found in the cell membrane. The catalysed reaction is a quinone + NADH + 5 H(+)(in) = a quinol + NAD(+) + 4 H(+)(out). In terms of biological role, NDH-1 shuttles electrons from NADH, via FMN and iron-sulfur (Fe-S) centers, to quinones in the respiratory chain. The immediate electron acceptor for the enzyme in this species is believed to be ubiquinone. Couples the redox reaction to proton translocation (for every two electrons transferred, four hydrogen ions are translocated across the cytoplasmic membrane), and thus conserves the redox energy in a proton gradient. The protein is NADH-quinone oxidoreductase subunit I of Thermobifida fusca (strain YX).